The chain runs to 255 residues: Carboxy-S-adenosyl-L-methionine synthase (255 aa).

S-adenosyl-L-methionine is bound by residues Y45, 70–72 (GCS), 124–125 (DI), and N139.

It belongs to the class I-like SAM-binding methyltransferase superfamily. Cx-SAM synthase family. In terms of assembly, homodimer.

The enzyme catalyses prephenate + S-adenosyl-L-methionine = carboxy-S-adenosyl-L-methionine + 3-phenylpyruvate + H2O. Functionally, catalyzes the conversion of S-adenosyl-L-methionine (SAM) to carboxy-S-adenosyl-L-methionine (Cx-SAM). The chain is Carboxy-S-adenosyl-L-methionine synthase from Hamiltonella defensa subsp. Acyrthosiphon pisum (strain 5AT).